Consider the following 721-residue polypeptide: Fatty acid oxidation complex subunit alpha (721 aa).

An enoyl-CoA hydratase/isomerase region spans residues 1–190 (MIYEGKAITV…KVGAVDAVVA (190 aa)). Residue aspartate 297 participates in substrate binding. Positions 312 to 721 (KDVKQAAVLG…SFFGQASSEE (410 aa)) are 3-hydroxyacyl-CoA dehydrogenase. NAD(+) contacts are provided by residues methionine 325, aspartate 344, 401 to 403 (VVE), lysine 408, and serine 430. Histidine 451 serves as the catalytic For 3-hydroxyacyl-CoA dehydrogenase activity. Asparagine 454 is an NAD(+) binding site. Substrate contacts are provided by asparagine 501 and tyrosine 660.

In the N-terminal section; belongs to the enoyl-CoA hydratase/isomerase family. The protein in the C-terminal section; belongs to the 3-hydroxyacyl-CoA dehydrogenase family. In terms of assembly, heterotetramer of two alpha chains (FadB) and two beta chains (FadA).

It carries out the reaction a (3S)-3-hydroxyacyl-CoA + NAD(+) = a 3-oxoacyl-CoA + NADH + H(+). The enzyme catalyses a (3S)-3-hydroxyacyl-CoA = a (2E)-enoyl-CoA + H2O. It catalyses the reaction a 4-saturated-(3S)-3-hydroxyacyl-CoA = a (3E)-enoyl-CoA + H2O. The catalysed reaction is (3S)-3-hydroxybutanoyl-CoA = (3R)-3-hydroxybutanoyl-CoA. It carries out the reaction a (3Z)-enoyl-CoA = a 4-saturated (2E)-enoyl-CoA. The enzyme catalyses a (3E)-enoyl-CoA = a 4-saturated (2E)-enoyl-CoA. The protein operates within lipid metabolism; fatty acid beta-oxidation. Involved in the aerobic and anaerobic degradation of long-chain fatty acids via beta-oxidation cycle. Catalyzes the formation of 3-oxoacyl-CoA from enoyl-CoA via L-3-hydroxyacyl-CoA. It can also use D-3-hydroxyacyl-CoA and cis-3-enoyl-CoA as substrate. The sequence is that of Fatty acid oxidation complex subunit alpha from Pseudomonas savastanoi pv. phaseolicola (strain 1448A / Race 6) (Pseudomonas syringae pv. phaseolicola (strain 1448A / Race 6)).